A 946-amino-acid polypeptide reads, in one-letter code: Villin-4 (946 aa).

4 Gelsolin-like repeats span residues 28–109, 152–219, 274–339, and 641–715; these read NFKP…ETEK, VHVK…EDGK, LEHE…TIMF, and EIHH…PQFF. Disordered regions lie at residues 744 to 789, 801 to 832, and 844 to 902; these read ATPS…GRSP, PSTRYLSTPPPAVKKLFPRSGGSELPKTSSKQ, and GPTK…PAPD. A compositionally biased stretch (polar residues) spans 765 to 777; the sequence is QDKSQQRTRSMSH. The span at 874–883 shows a compositional bias: acidic residues; it reads SENEPEDDEN. Positions 881–946 constitute an HP domain; sequence DENSTIYPYE…NRLKSDLQLF (66 aa).

The protein belongs to the villin/gelsolin family.

It localises to the cytoplasm. The protein resides in the cytoskeleton. Its function is as follows. Ca(2+)-regulated actin-binding protein. Binds actin microfilaments (MFs). Involved in actin filament bundling, severing and capping. Caps the barbed end of actin filaments and is able to sever them in a calcium-dependent manner. The chain is Villin-4 from Oryza sativa subsp. japonica (Rice).